The primary structure comprises 673 residues: UvrABC system protein B (673 aa).

In terms of domain architecture, Helicase ATP-binding spans 26-183 (EGLEDGLAHQ…RRLAELQYTR (158 aa)). 39-46 (GVTGSGKT) contributes to the ATP binding site. Positions 92 to 115 (YYDYYQPEAYVPSSDTFIEKDASV) match the Beta-hairpin motif. The 167-residue stretch at 431–597 (QVDDLLSEIR…GLNKKVVDIL (167 aa)) folds into the Helicase C-terminal domain. In terms of domain architecture, UVR spans 633 to 668 (QQKIHELEGQMMQHAQNLEFEEAAQIRDQLHQLREL).

The protein belongs to the UvrB family. As to quaternary structure, forms a heterotetramer with UvrA during the search for lesions. Interacts with UvrC in an incision complex.

Its subcellular location is the cytoplasm. Its function is as follows. The UvrABC repair system catalyzes the recognition and processing of DNA lesions. A damage recognition complex composed of 2 UvrA and 2 UvrB subunits scans DNA for abnormalities. Upon binding of the UvrA(2)B(2) complex to a putative damaged site, the DNA wraps around one UvrB monomer. DNA wrap is dependent on ATP binding by UvrB and probably causes local melting of the DNA helix, facilitating insertion of UvrB beta-hairpin between the DNA strands. Then UvrB probes one DNA strand for the presence of a lesion. If a lesion is found the UvrA subunits dissociate and the UvrB-DNA preincision complex is formed. This complex is subsequently bound by UvrC and the second UvrB is released. If no lesion is found, the DNA wraps around the other UvrB subunit that will check the other stand for damage. The chain is UvrABC system protein B from Salmonella heidelberg (strain SL476).